The following is an 805-amino-acid chain: Sucrose synthase (805 aa).

Positions 275–752 (MVFNVVILSP…GLQRIEEKYT (478 aa)) are GT-B glycosyltransferase.

The protein belongs to the glycosyltransferase 1 family. Plant sucrose synthase subfamily.

It catalyses the reaction an NDP-alpha-D-glucose + D-fructose = a ribonucleoside 5'-diphosphate + sucrose + H(+). Its function is as follows. Sucrose-cleaving enzyme that provides UDP-glucose and fructose for various metabolic pathways. The chain is Sucrose synthase (SS1) from Vigna radiata var. radiata (Mung bean).